We begin with the raw amino-acid sequence, 228 residues long: MAQPAHVPKFGNWDGENISYTTYFETVHRDKGDGSKIFNPNDPEENPQAFYPRTVAQDHQHSEKHHNDTSTDYHVVKQHRRKHHRREDREFHRYVEAPRPHRSPFQGVDMDSHRSRNHGTSATMSSSVKRNSDNWLPQHQHHRRTNKDLAEGKSWLFTTTTASSYTKSRKLSRECSSTTQSSISAKNLVPGDETRSPISWRVFQSYLTKLKEQKQIAATKIGQHLNLR.

The segment covering 56–75 (AQDHQHSEKHHNDTSTDYHV) has biased composition (basic and acidic residues). Disordered regions lie at residues 56–87 (AQDH…HRRE) and 99–133 (RPHR…RNSD). Residues 76-86 (VKQHRRKHHRR) show a composition bias toward basic residues. Over residues 118–133 (HGTSATMSSSVKRNSD) the composition is skewed to polar residues.

It belongs to the RIN4 family.

The sequence is that of NOI-like protein from Elaeis oleifera (American oil palm).